A 75-amino-acid polypeptide reads, in one-letter code: Cruzioseptin-7 (75 aa).

A signal peptide spans 1–22 (MAKLKKSLFLVLFLGLVSLSIC). The propeptide occupies 23–43 (EEEKREEENEEVQEDDDQSEE). The interval 25–44 (EKREEENEEVQEDDDQSEEK) is disordered. Over residues 30 to 41 (ENEEVQEDDDQS) the composition is skewed to acidic residues.

As to expression, expressed by the skin glands.

The protein localises to the secreted. Functionally, has antimicrobial activity. This chain is Cruzioseptin-7, found in Cruziohyla calcarifer (Splendid leaf frog).